The chain runs to 256 residues: Small ribosomal subunit protein uS2 (256 aa).

The protein belongs to the universal ribosomal protein uS2 family.

This Ruegeria sp. (strain TM1040) (Silicibacter sp.) protein is Small ribosomal subunit protein uS2.